Here is a 396-residue protein sequence, read N- to C-terminus: 1-deoxy-D-xylulose 5-phosphate reductoisomerase (396 aa).

NADPH contacts are provided by Thr-15, Gly-16, Ser-17, Ile-18, Gly-41, and Asn-130. Lys-131 is a 1-deoxy-D-xylulose 5-phosphate binding site. Residue Glu-132 participates in NADPH binding. Asp-155 contributes to the Mn(2+) binding site. Positions 156, 157, 181, and 204 each coordinate 1-deoxy-D-xylulose 5-phosphate. Glu-157 provides a ligand contact to Mn(2+). Position 210 (Gly-210) interacts with NADPH. Residues Ser-217, Asn-222, Lys-223, and Glu-226 each coordinate 1-deoxy-D-xylulose 5-phosphate. Position 226 (Glu-226) interacts with Mn(2+).

This sequence belongs to the DXR family. It depends on Mg(2+) as a cofactor. Requires Mn(2+) as cofactor.

It catalyses the reaction 2-C-methyl-D-erythritol 4-phosphate + NADP(+) = 1-deoxy-D-xylulose 5-phosphate + NADPH + H(+). It participates in isoprenoid biosynthesis; isopentenyl diphosphate biosynthesis via DXP pathway; isopentenyl diphosphate from 1-deoxy-D-xylulose 5-phosphate: step 1/6. Catalyzes the NADPH-dependent rearrangement and reduction of 1-deoxy-D-xylulose-5-phosphate (DXP) to 2-C-methyl-D-erythritol 4-phosphate (MEP). This chain is 1-deoxy-D-xylulose 5-phosphate reductoisomerase, found in Bifidobacterium longum subsp. infantis (strain ATCC 15697 / DSM 20088 / JCM 1222 / NCTC 11817 / S12).